Reading from the N-terminus, the 339-residue chain is Transaldolase (339 aa).

K135 (schiff-base intermediate with substrate) is an active-site residue.

Belongs to the transaldolase family. Type 1 subfamily. Homodimer.

The protein resides in the cytoplasm. The enzyme catalyses D-sedoheptulose 7-phosphate + D-glyceraldehyde 3-phosphate = D-erythrose 4-phosphate + beta-D-fructose 6-phosphate. The protein operates within carbohydrate degradation; pentose phosphate pathway; D-glyceraldehyde 3-phosphate and beta-D-fructose 6-phosphate from D-ribose 5-phosphate and D-xylulose 5-phosphate (non-oxidative stage): step 2/3. Transaldolase is important for the balance of metabolites in the pentose-phosphate pathway. This is Transaldolase from Prochlorococcus marinus (strain MIT 9211).